The following is a 382-amino-acid chain: UDP-4-amino-4-deoxy-L-arabinose--oxoglutarate aminotransferase (382 aa).

Lysine 182 carries the N6-(pyridoxal phosphate)lysine modification.

This sequence belongs to the DegT/DnrJ/EryC1 family. ArnB subfamily. As to quaternary structure, homodimer. Pyridoxal 5'-phosphate serves as cofactor.

It carries out the reaction UDP-4-amino-4-deoxy-beta-L-arabinose + 2-oxoglutarate = UDP-beta-L-threo-pentopyranos-4-ulose + L-glutamate. Its pathway is nucleotide-sugar biosynthesis; UDP-4-deoxy-4-formamido-beta-L-arabinose biosynthesis; UDP-4-deoxy-4-formamido-beta-L-arabinose from UDP-alpha-D-glucuronate: step 2/3. The protein operates within bacterial outer membrane biogenesis; lipopolysaccharide biosynthesis. Catalyzes the conversion of UDP-4-keto-arabinose (UDP-Ara4O) to UDP-4-amino-4-deoxy-L-arabinose (UDP-L-Ara4N). The modified arabinose is attached to lipid A and is required for resistance to polymyxin and cationic antimicrobial peptides. The chain is UDP-4-amino-4-deoxy-L-arabinose--oxoglutarate aminotransferase from Yersinia enterocolitica serotype O:8 / biotype 1B (strain NCTC 13174 / 8081).